Consider the following 180-residue polypeptide: Large ribosomal subunit protein uL6 (180 aa).

This sequence belongs to the universal ribosomal protein uL6 family. Part of the 50S ribosomal subunit.

Its function is as follows. This protein binds to the 23S rRNA, and is important in its secondary structure. It is located near the subunit interface in the base of the L7/L12 stalk, and near the tRNA binding site of the peptidyltransferase center. The protein is Large ribosomal subunit protein uL6 of Thermoanaerobacter sp. (strain X514).